We begin with the raw amino-acid sequence, 397 residues long: GDNF family receptor alpha-3 (397 aa).

An N-terminal signal peptide occupies residues Met1–Gly28. Cys48 and Cys54 are disulfide-bonded. Residues Asn92 and Asn145 are each glycosylated (N-linked (GlcNAc...) asparagine). Intrachain disulfides connect Cys159–Cys215, Cys166–Cys172, Cys183–Cys193, Cys188–Cys236, Cys217–Cys224, Cys245–Cys313, Cys252–Cys258, Cys269–Cys285, Cys278–Cys337, and Cys315–Cys325. Asn306 is a glycosylation site (N-linked (GlcNAc...) asparagine). The GPI-anchor amidated asparagine moiety is linked to residue Asn371. The propeptide at Pro372–Trp397 is removed in mature form.

This sequence belongs to the GDNFR family. Interacts with ARTN ligand and RET: forms a 2:2:2 ternary complex composed of ARTN ligand, GFRA3 and RET receptor. Interacts with SORL1.

It is found in the cell membrane. Its function is as follows. Receptor for artemin (ARTN), a growth factor that supports the survival of sensory and sympathetic peripheral neurons. ARTN-binding leads to autophosphorylation and activation of the RET receptor. This is GDNF family receptor alpha-3 (Gfra3) from Mus musculus (Mouse).